Reading from the N-terminus, the 47-residue chain is PhoP/PhoQ regulator MgrB (47 aa).

The helical transmembrane segment at 6 to 26 (WVILIIVLIACVILWTQTINV) threads the bilayer.

The protein belongs to the MgrB family. In terms of assembly, may form homooligomers. Probably interacts with the periplasmic domain of PhoQ.

It is found in the cell inner membrane. In terms of biological role, phoP-regulated transcription is redox-sensitive, being activated when the periplasm becomes more reducing. MgrB acts between DsbA/DsbB and PhoP/PhoQ in this pathway. Represses PhoP/PhoQ signaling, possibly by binding to the periplasmic domain of PhoQ, altering its activity and that of downstream effector PhoP. The polypeptide is PhoP/PhoQ regulator MgrB (Enterobacter sp. (strain 638)).